Here is a 548-residue protein sequence, read N- to C-terminus: ComP-specific O-oligosaccharyltransferase (548 aa).

Transmembrane regions (helical) follow at residues 8–28 (IKNYTIVSGVFFLGSAFIIPN), 32–52 (LSSTLYKELIAVLGLLILLTV), 68–88 (WFLFVIFIIFIQLIVGEIYFF), 91–111 (FFFSISFLVILFLSFLLGFNE), 119–139 (IVKKIAWIFIIVVQISFLIAI), 164–184 (LGQPNQFSTLILITLFLLCYL), 189–209 (SLNNMVFNILSFCLIFANVMT), 213–233 (SAWISVILISLLYLLKFQKKI), 239–259 (IFFNIVFWTLVYCVPLLFNLI), 331–351 (MLWNGFFIGLIISILILCFLI), 363–383 (LFLFFCVVAFFVHCLLEYPFA), and 418–438 (TLFLGCCWLGYVAFWVEVLDI).

It belongs to the PglL O-oligosaccharyltransferase family.

It is found in the cell membrane. Functionally, specifically catalyzes the glycosylation of the pilin-like competence factor ComP. In Acinetobacter baylyi (strain ATCC 33305 / BD413 / ADP1), this protein is ComP-specific O-oligosaccharyltransferase.